We begin with the raw amino-acid sequence, 397 residues long: Acetate kinase (397 aa).

Asn8 lines the Mg(2+) pocket. ATP is bound at residue Lys15. Residue Arg89 coordinates substrate. Residue Asp146 is the Proton donor/acceptor of the active site. Residues 206-210 (HLGNG), 281-283 (DLR), and 329-333 (GVGEN) each bind ATP. Glu382 is a Mg(2+) binding site.

The protein belongs to the acetokinase family. As to quaternary structure, homodimer. Mg(2+) serves as cofactor. Requires Mn(2+) as cofactor.

It localises to the cytoplasm. The catalysed reaction is acetate + ATP = acetyl phosphate + ADP. The protein operates within metabolic intermediate biosynthesis; acetyl-CoA biosynthesis; acetyl-CoA from acetate: step 1/2. Catalyzes the formation of acetyl phosphate from acetate and ATP. Can also catalyze the reverse reaction. The protein is Acetate kinase of Bacillus anthracis.